Here is a 479-residue protein sequence, read N- to C-terminus: Glutathione gamma-glutamylcysteinyltransferase 3 (479 aa).

Residues 1–221 enclose the Peptidase C83 domain; the sequence is MASAGLYRRV…GYMIISKLKR (221 aa). Active-site residues include cysteine 56, histidine 162, and aspartate 180.

It belongs to the phytochelatin synthase family. Expressed in roots, nodules and leaves.

It catalyses the reaction [Glu(-Cys)](n)-Gly + glutathione + H(+) = [Glu(-Cys)](n+1)-Gly + glycine. Requires cadmium for activity. Functionally, involved in the synthesis of phytochelatins (PC) and homophytochelatins (hPC), the heavy-metal-binding peptides of plants. The sequence is that of Glutathione gamma-glutamylcysteinyltransferase 3 (PCS3) from Lotus japonicus (Lotus corniculatus var. japonicus).